We begin with the raw amino-acid sequence, 146 residues long: Small ribosomal subunit protein uS5 (146 aa).

Residues 8 to 71 form the S5 DRBM domain; that stretch reads FSEVVVNIGR…DDAFKNIIKV (64 aa).

Belongs to the universal ribosomal protein uS5 family. As to quaternary structure, part of the 30S ribosomal subunit. Contacts proteins S4 and S8.

With S4 and S12 plays an important role in translational accuracy. Its function is as follows. Located at the back of the 30S subunit body where it stabilizes the conformation of the head with respect to the body. The polypeptide is Small ribosomal subunit protein uS5 (Helicobacter hepaticus (strain ATCC 51449 / 3B1)).